A 662-amino-acid chain; its full sequence is Protein distal antenna (662 aa).

An HTH psq-type domain is found at 21–72 (TKGKRPLRHLTATDKIDAIQRIHDGESKASVARDIGVPESTLRGWCKNEEKL). Residues 48 to 68 (KASVARDIGVPESTLRGWCKN) constitute a DNA-binding region (H-T-H motif). Disordered stretches follow at residues 265–299 (RNAR…STPS), 348–407 (YSQM…PEDT), 491–537 (PEDL…DDEV), and 558–596 (QSSP…KSTC). The span at 349–391 (SQMPRPSSPQQPQSTPPTTTTTQQQQPQSSTPPTATPPIVSTP) shows a compositional bias: low complexity. Positions 511 to 520 (FNPSPSTSIK) are enriched in polar residues. Residues 527-536 (VDEDEDEDDE) are compositionally biased toward acidic residues.

In terms of assembly, homomers. Interacts with itself, danr, ey and dac to form a complex (or complexes) containing the RD factors.

Its subcellular location is the nucleus. Probable transcription factor with a role in the retinal determination (RD) network. Contributes to differentiation of antenna-specific characteristics. In Culex quinquefasciatus (Southern house mosquito), this protein is Protein distal antenna.